The sequence spans 356 residues: UDP-N-acetylglucosamine--N-acetylmuramyl-(pentapeptide) pyrophosphoryl-undecaprenol N-acetylglucosamine transferase (356 aa).

UDP-N-acetyl-alpha-D-glucosamine-binding positions include 12 to 14 (TGG), asparagine 124, arginine 163, serine 188, isoleucine 242, and glutamine 287.

The protein belongs to the glycosyltransferase 28 family. MurG subfamily.

The protein resides in the cell inner membrane. The catalysed reaction is di-trans,octa-cis-undecaprenyl diphospho-N-acetyl-alpha-D-muramoyl-L-alanyl-D-glutamyl-meso-2,6-diaminopimeloyl-D-alanyl-D-alanine + UDP-N-acetyl-alpha-D-glucosamine = di-trans,octa-cis-undecaprenyl diphospho-[N-acetyl-alpha-D-glucosaminyl-(1-&gt;4)]-N-acetyl-alpha-D-muramoyl-L-alanyl-D-glutamyl-meso-2,6-diaminopimeloyl-D-alanyl-D-alanine + UDP + H(+). The protein operates within cell wall biogenesis; peptidoglycan biosynthesis. Functionally, cell wall formation. Catalyzes the transfer of a GlcNAc subunit on undecaprenyl-pyrophosphoryl-MurNAc-pentapeptide (lipid intermediate I) to form undecaprenyl-pyrophosphoryl-MurNAc-(pentapeptide)GlcNAc (lipid intermediate II). The sequence is that of UDP-N-acetylglucosamine--N-acetylmuramyl-(pentapeptide) pyrophosphoryl-undecaprenol N-acetylglucosamine transferase from Pseudomonas syringae pv. syringae (strain B728a).